A 165-amino-acid polypeptide reads, in one-letter code: Transcription antitermination protein NusB (165 aa).

The protein belongs to the NusB family.

Functionally, involved in transcription antitermination. Required for transcription of ribosomal RNA (rRNA) genes. Binds specifically to the boxA antiterminator sequence of the ribosomal RNA (rrn) operons. The protein is Transcription antitermination protein NusB of Nitratidesulfovibrio vulgaris (strain DSM 19637 / Miyazaki F) (Desulfovibrio vulgaris).